The sequence spans 212 residues: Interleukin-6 (212 aa).

Residues 1 to 29 (MNSLSTSAFSPVAFSLGLLLVMATAFPTP) form the signal peptide. Cysteines 72 and 78 form a disulfide. Ser81 carries the phosphoserine modification. Cys101 and Cys111 form a disulfide bridge. A disordered region spans residues 156-175 (QKGKNPDKATTPNPTTNAGL). Residues 163–175 (KATTPNPTTNAGL) show a composition bias toward polar residues.

The protein belongs to the IL-6 superfamily. In terms of assembly, component of a hexamer of two molecules each of IL6, IL6R and IL6ST; first binds to IL6R to associate with the signaling subunit IL6ST. Interacts with IL6R (via the N-terminal ectodomain); this interaction may be affected by IL6R-binding with SORL1, hence decreasing IL6 cis signaling. Interacts with SORL1 (via the N-terminal ectodomain); this interaction leads to IL6 internalization and lysosomal degradation. May form a trimeric complex with the soluble SORL1 ectodomain and soluble IL6R receptor; this interaction might stabilize circulating IL6, hence promoting IL6 trans signaling.

The protein resides in the secreted. Cytokine with a wide variety of biological functions in immunity, tissue regeneration, and metabolism. Binds to IL6R, then the complex associates to the signaling subunit IL6ST/gp130 to trigger the intracellular IL6-signaling pathway. The interaction with the membrane-bound IL6R and IL6ST stimulates 'classic signaling', whereas the binding of IL6 and soluble IL6R to IL6ST stimulates 'trans-signaling'. Alternatively, 'cluster signaling' occurs when membrane-bound IL6:IL6R complexes on transmitter cells activate IL6ST receptors on neighboring receiver cells. Its function is as follows. IL6 is a potent inducer of the acute phase response. Rapid production of IL6 contributes to host defense during infection and tissue injury, but excessive IL6 synthesis is involved in disease pathology. In the innate immune response, is synthesized by myeloid cells, such as macrophages and dendritic cells, upon recognition of pathogens through toll-like receptors (TLRs) at the site of infection or tissue injury. In the adaptive immune response, is required for the differentiation of B cells into immunoglobulin-secreting cells. Plays a major role in the differentiation of CD4(+) T cell subsets. Essential factor for the development of T follicular helper (Tfh) cells that are required for the induction of germinal-center formation. Required to drive naive CD4(+) T cells to the Th17 lineage. Also required for proliferation of myeloma cells and the survival of plasmablast cells. In terms of biological role, acts as an essential factor in bone homeostasis and on vessels directly or indirectly by induction of VEGF, resulting in increased angiogenesis activity and vascular permeability. Induces, through 'trans-signaling' and synergistically with IL1B and TNF, the production of VEGF. Involved in metabolic controls, is discharged into the bloodstream after muscle contraction increasing lipolysis and improving insulin resistance. 'Trans-signaling' in central nervous system also regulates energy and glucose homeostasis. Mediates, through GLP-1, crosstalk between insulin-sensitive tissues, intestinal L cells and pancreatic islets to adapt to changes in insulin demand. Also acts as a myokine. Plays a protective role during liver injury, being required for maintenance of tissue regeneration. Also has a pivotal role in iron metabolism by regulating HAMP/hepcidin expression upon inflammation or bacterial infection. Through activation of IL6ST-YAP-NOTCH pathway, induces inflammation-induced epithelial regeneration. In Sus scrofa (Pig), this protein is Interleukin-6 (IL6).